A 139-amino-acid chain; its full sequence is Ribosome-binding factor A (139 aa).

The tract at residues 112-139 (EARTQGQAAPAPDVEPAPGAAPDDEAEE) is disordered. A compositionally biased stretch (low complexity) spans 119–132 (AAPAPDVEPAPGAA).

Belongs to the RbfA family. Monomer. Binds 30S ribosomal subunits, but not 50S ribosomal subunits or 70S ribosomes.

It is found in the cytoplasm. Its function is as follows. One of several proteins that assist in the late maturation steps of the functional core of the 30S ribosomal subunit. Associates with free 30S ribosomal subunits (but not with 30S subunits that are part of 70S ribosomes or polysomes). Required for efficient processing of 16S rRNA. May interact with the 5'-terminal helix region of 16S rRNA. This Anaeromyxobacter dehalogenans (strain 2CP-1 / ATCC BAA-258) protein is Ribosome-binding factor A.